We begin with the raw amino-acid sequence, 340 residues long: Diacylglycerol acyltransferase/mycolyltransferase Ag85C (340 aa).

The N-terminal stretch at 1 to 45 is a signal peptide; that stretch reads MTFFEQVRRLRSAATTLPRRLAIAAMGAVLVYGLVGTFGGPATAG. 86 to 87 is a binding site for substrate; it reads LR. The interval 102-112 is fibronectin-binding; sequence FEEYYQSGLSV. Residues Ser170 and Asn198 each contribute to the substrate site. Ser170 functions as the Nucleophile in the catalytic mechanism. Glu274 is a catalytic residue. Residues 276-279 and 306-308 contribute to the substrate site; these read LTLR and HSW. The active site involves His306.

Belongs to the mycobacterial A85 antigen family. As to quaternary structure, homodimer.

It is found in the secreted. The catalysed reaction is an acyl-CoA + a 1,2-diacyl-sn-glycerol = a triacyl-sn-glycerol + CoA. The enzyme catalyses 2 alpha,alpha'-trehalose 6-mycolate = alpha,alpha'-trehalose 6,6'-bismycolate + alpha,alpha-trehalose. Its function is as follows. The antigen 85 proteins (FbpA, FbpB, FbpC) are responsible for the high affinity of mycobacteria to fibronectin, a large adhesive glycoprotein, which facilitates the attachment of M.tuberculosis to murine alveolar macrophages (AMs). They also help to maintain the integrity of the cell wall by catalyzing the transfer of mycolic acids to cell wall arabinogalactan and through the synthesis of alpha,alpha-trehalose dimycolate (TDM, cord factor). They catalyze the transfer of a mycoloyl residue from one molecule of alpha,alpha-trehalose monomycolate (TMM) to another TMM, leading to the formation of TDM. This is Diacylglycerol acyltransferase/mycolyltransferase Ag85C (fbpC) from Mycobacterium bovis (strain ATCC BAA-935 / AF2122/97).